Here is a 311-residue protein sequence, read N- to C-terminus: Homoserine kinase (311 aa).

88 to 98 (PEGLGLGSSGA) is an ATP binding site.

The protein belongs to the GHMP kinase family. Homoserine kinase subfamily.

The protein localises to the cytoplasm. It carries out the reaction L-homoserine + ATP = O-phospho-L-homoserine + ADP + H(+). It participates in amino-acid biosynthesis; L-threonine biosynthesis; L-threonine from L-aspartate: step 4/5. Catalyzes the ATP-dependent phosphorylation of L-homoserine to L-homoserine phosphate. The polypeptide is Homoserine kinase (Saccharolobus islandicus (strain L.S.2.15 / Lassen #1) (Sulfolobus islandicus)).